A 257-amino-acid polypeptide reads, in one-letter code: Enterotoxin type A (257 aa).

An N-terminal signal peptide occupies residues M1–G24. A disulfide bond links C120 and C130. Positions 211, 249, and 251 each coordinate Zn(2+).

This sequence belongs to the staphylococcal/streptococcal toxin family. Monomer. Interacts with MHC class II molecules alpha/HLA-DRB1 and beta/HLA-DRA chains. The interaction with MHC-II molecules occurs at both zinc-dependent and zinc-independent sites. Interacts with T-cell receptor beta variable 7-9/TRBV7-9. Requires Zn(2+) as cofactor.

The protein resides in the secreted. Staphylococcal enterotoxin that activates the host immune system by binding as unprocessed molecules to major histocompatibility (MHC) complex class II and T-cell receptor (TCR) molecules. In turn, waves of cellular activation, cytokine production, and migration into the lung tissue and airways occur via alphabeta T-cells. Also causes the intoxication staphylococcal food poisoning syndrome. The illness is characterized by high fever, hypotension, diarrhea, shock, and in some cases death. The chain is Enterotoxin type A (entA) from Staphylococcus aureus.